The chain runs to 219 residues: Ras-related protein Rab-3B (219 aa).

Ala-2 carries the N-acetylalanine modification. Ser-31, Ser-32, Val-33, Gly-34, Lys-35, Thr-36, Ser-37, Pro-49, and Ser-53 together coordinate GTP. Thr-36 provides a ligand contact to Mg(2+). Positions Asp-45 to Asp-58 match the Switch 1 motif. Mg(2+) contacts are provided by Thr-54 and Asp-77. A Switch 2 motif is present at residues Thr-78–Met-96. Gly-80 contributes to the GTP binding site. Thr-86 is subject to Phosphothreonine. The GTP site is built by Asn-135, Lys-136, Asp-138, Ala-166, and Lys-167. Residues Ser-188 and Ser-190 each carry the phosphoserine modification. S-geranylgeranyl cysteine attachment occurs at residues Cys-217 and Cys-219. A Cysteine methyl ester modification is found at Cys-219.

This sequence belongs to the small GTPase superfamily. Rab family. Interacts with RIMS1, RIMS2, RPH3A and RPH3AL. The GTP-bound form interacts with GAS8/DRC4 (via coiled-coil domains). Interacts with GDI2, CHM and CHML; phosphorylation at Thr-86 disrupts these interactions. Interacts with MADD (via uDENN domain); the GTP-bound form is preferred for interaction. Mg(2+) is required as a cofactor. Phosphorylation of Thr-86 in the switch II region by LRRK2 prevents the association of RAB regulatory proteins, including CHM, CHML and RAB GDP dissociation inhibitor GDI2.

The protein resides in the cell membrane. It is found in the golgi apparatus. The enzyme catalyses GTP + H2O = GDP + phosphate + H(+). With respect to regulation, regulated by guanine nucleotide exchange factors (GEFs) which promote the exchange of bound GDP for free GTP. Regulated by GTPase activating proteins (GAPs) which increase the GTP hydrolysis activity. Inhibited by GDP dissociation inhibitors (GDIs) which prevent Rab-GDP dissociation. Its function is as follows. The small GTPases Rab are key regulators of intracellular membrane trafficking, from the formation of transport vesicles to their fusion with membranes. Rabs cycle between an inactive GDP-bound form and an active GTP-bound form that is able to recruit to membranes different sets of downstream effectors directly responsible for vesicle formation, movement, tethering and fusion. This is Ras-related protein Rab-3B (RAB3B) from Mesocricetus auratus (Golden hamster).